A 311-amino-acid chain; its full sequence is UPF0324 membrane protein VV1_3166 (311 aa).

10 helical membrane passes run 8–28 (FIFA…ALVL), 51–71 (LLSY…AIAV), 74–94 (DGIG…FLVA), 106–126 (LISA…APAI), 133–153 (IALA…IFPV), 165–185 (FGTW…AASA), 197–217 (LKLA…ILFA), 228–248 (LVLP…DLFP), 256–276 (GIFS…GCSI), and 289–309 (LIFG…WLLL).

It belongs to the UPF0324 family.

The protein resides in the cell membrane. In Vibrio vulnificus (strain CMCP6), this protein is UPF0324 membrane protein VV1_3166.